The sequence spans 40 residues: MRKFFESWPMAAVLWVWLTAGIIVEFNRFYPDLLFHPMGL.

Residues 4–24 (FFESWPMAAVLWVWLTAGIIV) traverse the membrane as a helical segment.

Belongs to the PsaJ family.

It localises to the cellular thylakoid membrane. Its function is as follows. May help in the organization of the PsaE and PsaF subunits. In Prochlorococcus marinus (strain MIT 9313), this protein is Photosystem I reaction center subunit IX.